The following is a 64-amino-acid chain: Cytochrome c oxidase subunit 2 (64 aa).

At 1–14 (MAHPSQLGFQDAAS) the chain is on the mitochondrial intermembrane side. The helical transmembrane segment at 15-45 (PMMEELLHFHDHALMVVFLISTFVLYIILTM) threads the bilayer. Residues 46 to 64 (LTTKLTDKLILESHEIEII) lie on the Mitochondrial matrix side of the membrane.

This sequence belongs to the cytochrome c oxidase subunit 2 family. In terms of assembly, component of the cytochrome c oxidase (complex IV, CIV), a multisubunit enzyme composed of 14 subunits. The complex is composed of a catalytic core of 3 subunits MT-CO1, MT-CO2 and MT-CO3, encoded in the mitochondrial DNA, and 11 supernumerary subunits COX4I, COX5A, COX5B, COX6A, COX6B, COX6C, COX7A, COX7B, COX7C, COX8 and NDUFA4, which are encoded in the nuclear genome. The complex exists as a monomer or a dimer and forms supercomplexes (SCs) in the inner mitochondrial membrane with NADH-ubiquinone oxidoreductase (complex I, CI) and ubiquinol-cytochrome c oxidoreductase (cytochrome b-c1 complex, complex III, CIII), resulting in different assemblies (supercomplex SCI(1)III(2)IV(1) and megacomplex MCI(2)III(2)IV(2)). Found in a complex with TMEM177, COA6, COX18, COX20, SCO1 and SCO2. Interacts with TMEM177 in a COX20-dependent manner. Interacts with COX20. Interacts with COX16. Requires Cu cation as cofactor.

Its subcellular location is the mitochondrion inner membrane. It carries out the reaction 4 Fe(II)-[cytochrome c] + O2 + 8 H(+)(in) = 4 Fe(III)-[cytochrome c] + 2 H2O + 4 H(+)(out). Component of the cytochrome c oxidase, the last enzyme in the mitochondrial electron transport chain which drives oxidative phosphorylation. The respiratory chain contains 3 multisubunit complexes succinate dehydrogenase (complex II, CII), ubiquinol-cytochrome c oxidoreductase (cytochrome b-c1 complex, complex III, CIII) and cytochrome c oxidase (complex IV, CIV), that cooperate to transfer electrons derived from NADH and succinate to molecular oxygen, creating an electrochemical gradient over the inner membrane that drives transmembrane transport and the ATP synthase. Cytochrome c oxidase is the component of the respiratory chain that catalyzes the reduction of oxygen to water. Electrons originating from reduced cytochrome c in the intermembrane space (IMS) are transferred via the dinuclear copper A center (CU(A)) of subunit 2 and heme A of subunit 1 to the active site in subunit 1, a binuclear center (BNC) formed by heme A3 and copper B (CU(B)). The BNC reduces molecular oxygen to 2 water molecules using 4 electrons from cytochrome c in the IMS and 4 protons from the mitochondrial matrix. This Geophagus steindachneri (Red hump earth eater) protein is Cytochrome c oxidase subunit 2 (mt-co2).